Reading from the N-terminus, the 382-residue chain is MSFAGMLNRLHGQPESYDKKSKYKFGRTLGAGTYGVVREADGPSGKVAIKIILKKNVKGNEKMVYAELDMLQRLTHPHIVKFVDWFESRDKFYIVTQLATGGELFDRICDQGKFTEVDASQTIRQIMTAVDYLHDNDVVHRDLKPENLLYVTRDPDSDLVLADFGITKTLDIKEETLTTMAGSFGYAAPEVMEQKGHGKPVDMWSMGVITYTLLCGYSPFRSENLRDLLRECTAAPVPFHERYWKDVSQDAKDFILVLLVPEPEKRWTSKEALGHIWLSGKNATDHNLLPELEAYRRRARLRRVIEIVKLQNRIAKLKEHEEDPSESDMGDAQGASDNHKGDGSRLHALGLFAVREAKQKQESLQVEEELEKESRRRSFSNA.

The 256-residue stretch at Tyr23–Leu278 folds into the Protein kinase domain. Residues Leu29–Val37 and Lys50 each bind ATP. Asp142 (proton acceptor) is an active-site residue. The calmodulin-binding stretch occupies residues Glu291–Leu301. Disordered stretches follow at residues Lys318–Ser344 and Gln359–Ala382.

Belongs to the protein kinase superfamily. CAMK Ser/Thr protein kinase family. CaMK subfamily.

The enzyme catalyses L-seryl-[protein] + ATP = O-phospho-L-seryl-[protein] + ADP + H(+). The catalysed reaction is L-threonyl-[protein] + ATP = O-phospho-L-threonyl-[protein] + ADP + H(+). This chain is Calcium/calmodulin-dependent protein kinase, found in Metarhizium anisopliae (Entomophthora anisopliae).